The primary structure comprises 324 residues: Phospho-N-acetylmuramoyl-pentapeptide-transferase (324 aa).

10 helical membrane-spanning segments follow: residues 5–25 (VMVLAIILSFLITVILSPLFI), 50–70 (GTPTMGGIMILLSIVVTTLLM), 77–97 (LSVETYLLLFVTIGYGLLGFL), 117–137 (LIGQLMIAIVFYFVYQRSGFS), 147–167 (LSINLGFGYVLLLIFMLVGGS), 176–196 (LDGLLAGTAAIAFGAYAVLAW), 203–223 (IAIFCVSVVGAVLGFLVFNAH), 227–247 (VFMGDTGSLALGGAIATVAIL), 250–270 (LEILLVIIGGVFVIETLSVII), and 304–324 (VTFWAVGLLFAMLGIYIEVWI).

Belongs to the glycosyltransferase 4 family. MraY subfamily. Mg(2+) is required as a cofactor.

Its subcellular location is the cell membrane. It catalyses the reaction UDP-N-acetyl-alpha-D-muramoyl-L-alanyl-gamma-D-glutamyl-meso-2,6-diaminopimeloyl-D-alanyl-D-alanine + di-trans,octa-cis-undecaprenyl phosphate = di-trans,octa-cis-undecaprenyl diphospho-N-acetyl-alpha-D-muramoyl-L-alanyl-D-glutamyl-meso-2,6-diaminopimeloyl-D-alanyl-D-alanine + UMP. It participates in cell wall biogenesis; peptidoglycan biosynthesis. Its function is as follows. Catalyzes the initial step of the lipid cycle reactions in the biosynthesis of the cell wall peptidoglycan: transfers peptidoglycan precursor phospho-MurNAc-pentapeptide from UDP-MurNAc-pentapeptide onto the lipid carrier undecaprenyl phosphate, yielding undecaprenyl-pyrophosphoryl-MurNAc-pentapeptide, known as lipid I. In Geobacillus sp. (strain WCH70), this protein is Phospho-N-acetylmuramoyl-pentapeptide-transferase.